Reading from the N-terminus, the 572-residue chain is Chromatin assembly factor 1 subunit B (572 aa).

7 WD repeats span residues 11–54 (HNKE…DGKA), 64–103 (RHTKAVNVVRFSPTGEILASGGDDAVILLWKMNDSKEPEQ), 127–166 (GHLEDVYDICWATDGNLMTSASVDNTVIIWDVSKGQKISI), 169–208 (EHKSYVQGVTWDPLGQYIATLSCDRVLRIYNTQKKRVAFN), 228–279 (FHDD…RPIA), 301–347 (RPVA…PFGY), and 351–392 (IHYH…IPLK). Thr401 is subject to Phosphothreonine. The disordered stretch occupies residues 403 to 572 (DTAKKAKNQT…LAPDDSSKTV (170 aa)). Residues 411–430 (QTHQGSSPGSRSVEGTPSNR) show a composition bias toward polar residues. Ser416 bears the Phosphoserine mark. Position 426 is a phosphothreonine (Thr426). The span at 431–452 (TQDPSSPCTTPSPTTQSPAPSA) shows a compositional bias: low complexity. Residue Ser436 is modified to Phosphoserine. Position 440 is a phosphothreonine (Thr440). Phosphoserine is present on residues Ser456 and Ser465. The residue at position 501 (Lys501) is an N6-acetyllysine. Residues Thr502 and Thr510 each carry the phosphothreonine modification. The segment covering 511–529 (PLKTDTVPNPQPNSGTAPS) has biased composition (polar residues). The span at 546–559 (PELKRPRLEEREGD) shows a compositional bias: basic and acidic residues.

This sequence belongs to the WD repeat HIR1 family. Subunit of the CAF-1 complex that contains RBBP4, CHAF1B and CHAF1A. CHAF1A binds directly to CHAF1B. Interacts with histones H3.1, H3.2 and H3.1t.

It localises to the nucleus. The protein resides in the cytoplasm. Functionally, acts as a component of the histone chaperone complex chromatin assembly factor 1 (CAF-1), which assembles histone octamers onto DNA during replication and repair. CAF-1 performs the first step of the nucleosome assembly process, bringing newly synthesized histones H3 and H4 to replicating DNA; histones H2A/H2B can bind to this chromatin precursor subsequent to DNA replication to complete the histone octamer. The sequence is that of Chromatin assembly factor 1 subunit B from Mus musculus (Mouse).